Consider the following 266-residue polypeptide: Trypsin 5G1 (266 aa).

The signal sequence occupies residues 1–18; it reads MTRIILILTATFFACALG. The propeptide at 19 to 39 is activation peptide; that stretch reads ASTGGSHPLRPWWNALRSSGR. A Peptidase S1 domain is found at 40–265; sequence IVGGFEVPVE…VRDWVKEVSG (226 aa). Cysteine 66 and cysteine 82 form a disulfide bridge. Catalysis depends on charge relay system residues histidine 81 and aspartate 125. 2 cysteine pairs are disulfide-bonded: cysteine 190-cysteine 206 and cysteine 217-cysteine 241. Serine 221 acts as the Charge relay system in catalysis.

Belongs to the peptidase S1 family. Midgut.

The protein resides in the secreted. The protein localises to the extracellular space. The enzyme catalyses Preferential cleavage: Arg-|-Xaa, Lys-|-Xaa.. Its function is as follows. Major function may be to aid in digestion of the blood meal. The sequence is that of Trypsin 5G1 from Aedes aegypti (Yellowfever mosquito).